We begin with the raw amino-acid sequence, 139 residues long: Putative pre-16S rRNA nuclease (139 aa).

The protein belongs to the YqgF nuclease family.

The protein resides in the cytoplasm. In terms of biological role, could be a nuclease involved in processing of the 5'-end of pre-16S rRNA. This Phocaeicola vulgatus (strain ATCC 8482 / DSM 1447 / JCM 5826 / CCUG 4940 / NBRC 14291 / NCTC 11154) (Bacteroides vulgatus) protein is Putative pre-16S rRNA nuclease.